A 436-amino-acid polypeptide reads, in one-letter code: Ribulose bisphosphate carboxylase large chain (436 aa).

Substrate contacts are provided by Asn-104 and Thr-154. Lys-156 (proton acceptor) is an active-site residue. Lys-158 serves as a coordination point for substrate. Positions 182, 184, and 185 each coordinate Mg(2+). Lys-182 carries the N6-carboxylysine modification. Residue His-275 is the Proton acceptor of the active site. Substrate is bound by residues Arg-276, His-308, and Ser-360.

It belongs to the RuBisCO large chain family. Type I subfamily. In terms of assembly, heterohexadecamer of 8 large chains and 8 small chains. It depends on Mg(2+) as a cofactor.

Its subcellular location is the plastid. It localises to the chloroplast. The enzyme catalyses 2 (2R)-3-phosphoglycerate + 2 H(+) = D-ribulose 1,5-bisphosphate + CO2 + H2O. It carries out the reaction D-ribulose 1,5-bisphosphate + O2 = 2-phosphoglycolate + (2R)-3-phosphoglycerate + 2 H(+). Its function is as follows. RuBisCO catalyzes two reactions: the carboxylation of D-ribulose 1,5-bisphosphate, the primary event in carbon dioxide fixation, as well as the oxidative fragmentation of the pentose substrate in the photorespiration process. Both reactions occur simultaneously and in competition at the same active site. This Euglena myxocylindracea protein is Ribulose bisphosphate carboxylase large chain.